The following is a 220-amino-acid chain: Glutathione peroxidase (220 aa).

Sec-64 is an active-site residue. A non-standard amino acid (selenocysteine) is located at residue Sec-64.

It belongs to the glutathione peroxidase family. In terms of processing, during periods of oxidative stress, Sec-64 may react with a superoxide radical, irreversibly lose hydroselenide and be converted to dehydroalanine.

It carries out the reaction 2 glutathione + H2O2 = glutathione disulfide + 2 H2O. In terms of biological role, may protect the virus and component of infected cells from oxidative damage by peroxides whose formation may be stimulated by infection. The protein is Glutathione peroxidase (GPX1) of Homo sapiens (Human).